Reading from the N-terminus, the 195-residue chain is Nuclear transcription factor Y subunit C-10 (195 aa).

The segment at 1–24 is disordered; that stretch reads MRRPKSSHVRMEPVAPRSHNTMPM.

Belongs to the NFYC/HAP5 subunit family. As to quaternary structure, heterotrimeric transcription factor composed of three components, NF-YA, NF-YB and NF-YC. NF-YB and NF-YC must interact and dimerize for NF-YA association and DNA binding.

It is found in the nucleus. In terms of biological role, stimulates the transcription of various genes by recognizing and binding to a CCAAT motif in promoters. In Arabidopsis thaliana (Mouse-ear cress), this protein is Nuclear transcription factor Y subunit C-10 (NFYC10).